The following is a 263-amino-acid chain: L-aspartate dehydrogenase (263 aa).

Positions 120 and 186 each coordinate NAD(+). The active site involves His-216.

Belongs to the L-aspartate dehydrogenase family.

It carries out the reaction L-aspartate + NADP(+) + H2O = oxaloacetate + NH4(+) + NADPH + H(+). The enzyme catalyses L-aspartate + NAD(+) + H2O = oxaloacetate + NH4(+) + NADH + H(+). Its pathway is cofactor biosynthesis; NAD(+) biosynthesis; iminoaspartate from L-aspartate (dehydrogenase route): step 1/1. Specifically catalyzes the NAD or NADP-dependent dehydrogenation of L-aspartate to iminoaspartate. The sequence is that of L-aspartate dehydrogenase from Acinetobacter baylyi (strain ATCC 33305 / BD413 / ADP1).